Here is a 600-residue protein sequence, read N- to C-terminus: Proton channel OTOP1 (600 aa).

Positions 1–50 (MPGGPGAPSSPAASSGSSRAAPSGIAACPLSPPPLARGSPQASGPRRGAS) are disordered. Residues 1 to 56 (MPGGPGAPSSPAASSGSSRAAPSGIAACPLSPPPLARGSPQASGPRRGASVPQKLA) lie on the Cytoplasmic side of the membrane. Residues 7-27 (APSSPAASSGSSRAAPSGIAA) show a composition bias toward low complexity. A helical membrane pass occupies residues 57–78 (ETLSSQYGLNVFVAGLLFLLAW). At 79-86 (AVHATGVG) the chain is on the extracellular side. A helical membrane pass occupies residues 87 to 110 (KSDLLCVLTALMLLQLLWMLWYVG). The Cytoplasmic portion of the chain corresponds to 111-128 (RSYMQRRLIRPKDTHAGA). A helical transmembrane segment spans residues 129–151 (RWLRGSITLFAFITVVLGCLKVA). The Extracellular segment spans residues 152–161 (YFIGFSECLS). Residues 162–186 (ATEGVFPVTHAVHTLLQVYFLWGHA) form a helical membrane-spanning segment. The Cytoplasmic portion of the chain corresponds to 187–194 (KDIIMSFK). Residues 195–217 (TLERFGVIHSVFTNLLLWANSVL) form a helical membrane-spanning segment. The Extracellular portion of the chain corresponds to 218–262 (NESKHQLNEHKERLITLGFGNITIVLDDHTPQCNCTPPALCSALS). A helical membrane pass occupies residues 263–288 (HGIYYLYPFNIEYQILASTMLYVLWK). Residues 289–309 (NIGRRVDSSQHQKMQCRFDGV) are Cytoplasmic-facing. Residues 310-332 (LVGSVLGLTVLAATIAVVVVYMI) traverse the membrane as a helical segment. The Extracellular segment spans residues 333–342 (HIGRSKSKSE). Residues 343–368 (SALIMFYLYAITVLLLMGAAGLVGSW) traverse the membrane as a helical segment. Residues 369-386 (IYRVDEKSLDESKNPARK) are Cytoplasmic-facing. The helical transmembrane segment at 387-411 (LDVDLLVATGSGSWLLSWGSILAIA) threads the bilayer. Over 412-421 (CAETRPPYTW) the chain is Extracellular. Residues 422–442 (YNLPYSVLVIVEKYVQNIFII) form a helical membrane-spanning segment. The Cytoplasmic portion of the chain corresponds to 443-532 (ESVHLEPEGV…QGGMKRRLLR (90 aa)). Residues 533 to 551 (NITAFLFLCNISLWIPPAF) traverse the membrane as a helical segment. The Extracellular portion of the chain corresponds to 552 to 569 (GCRPEYDNGLEEIVFGFE). A helical transmembrane segment spans residues 570–593 (PWIIVVNLAMPFSIFYRMHAAAAL). The Cytoplasmic portion of the chain corresponds to 594-600 (FEVYCKI).

This sequence belongs to the otopetrin family. As to quaternary structure, homodimer. Interacts with STAT1, independently of STAT1 phosphorylation status. Expressed in thymus, heart, kidney, skin, vestibular system of the inner ear, sour taste cells, heart, uterus, dorsal root ganglion, adrenal gland, lactating mammary gland and stimulated mast cells. In the inner ear, expressed in the supporting cells in extrastriolar regions of the saccule and in the utricle, but not in the cochlea. Expressed in brown adipose tissue. Expressed in epididymal white adipose tissue (eWAT), as well as in inguinal fat, in obese animals, but hardly detectable in eWAT from lean mice. Expressed in acid-sensing taste receptor cells (PKD2L1-positive cells), but not in other types of taste cells (at protein level).

The protein localises to the cell membrane. The protein resides in the cell projection. Its subcellular location is the microvillus. The catalysed reaction is H(+)(in) = H(+)(out). Activated by both acid and alkali, with proton influx in response to extracellular acid and proton efflux during alkali stimulation. Inhibited by Zn(2+); this inhibition is thought to be pH-sensitive. Currents evoked in response to mild acid (pH 6.0) stimulus may also be mildly potentiated by exposure to Zn(2+). Activated by NH(4)Cl. In terms of biological role, proton-selective ion channel. Biphasically modulated by acid and alkali, mediating proton influx and efflux in response to extracellular acid and base stimulation, respectively. Sour taste receptor, which carries inward currents in response to extracellular acidification. Sensor for ammonium chloride (NH(4)Cl) in taste receptor cells. NH(4)Cl acts by increasing the intracellular pH, thereby generating a driving force for proton entry through OTOP1 channel. Might also participate in alkaline sensation. Plays a role in the regulation of Ca(2+) flux in response to purigenic (ATP, ADP and UDP) stimuli, leading to increase in cytosolic Ca(2+) due to influx of extracellular calcium. May play this role by inhibiting P2Y purinoceptor-mediated Ca(2+) release in a Ca(2+)-dependent manner and promote an influx of Ca(2+) in response to ATP. Through this mechanism and possibly others, plays a role in the formation and function of calcium carbonate-based structures in the vestibular system of the inner ear, called otoconia, that sense gravity and linear acceleration. In obesity, may attenuate adipose tissue inflammation, through the negative regulation of IFNG signaling, hence may play an adaptive role in the maintainance of metabolic homeostasis. Following alkali activation, may also be permeable Na(+), K(+), Cs(+) and Li(+). This Mus musculus (Mouse) protein is Proton channel OTOP1.